We begin with the raw amino-acid sequence, 190 residues long: MSNPVKGRHQARKRAVDLLFEAEARDLSPLEIIEVRSALAKSKLDVAPLHPYTVVVAQGVSEHTARIDELIISHLQGWKLDRLPAVDRAILRVSIWELLYADDVPEPVAVDEAVELAKELSTDDSPGFVNGLLGKVMLVTPQIRAAAQAVQQAVRMAAGTSEDHVPQREPAAGQLGQDDSNGGQVAAVCR.

Positions 158-190 are disordered; that stretch reads AGTSEDHVPQREPAAGQLGQDDSNGGQVAAVCR.

It belongs to the NusB family.

Involved in transcription antitermination. Required for transcription of ribosomal RNA (rRNA) genes. Binds specifically to the boxA antiterminator sequence of the ribosomal RNA (rrn) operons. This chain is Transcription antitermination protein NusB, found in Mycobacterium leprae (strain TN).